Consider the following 874-residue polypeptide: Alanine--tRNA ligase (874 aa).

Zn(2+)-binding residues include H562, H566, C664, and H668.

The protein belongs to the class-II aminoacyl-tRNA synthetase family. Requires Zn(2+) as cofactor.

It is found in the cytoplasm. The catalysed reaction is tRNA(Ala) + L-alanine + ATP = L-alanyl-tRNA(Ala) + AMP + diphosphate. In terms of biological role, catalyzes the attachment of alanine to tRNA(Ala) in a two-step reaction: alanine is first activated by ATP to form Ala-AMP and then transferred to the acceptor end of tRNA(Ala). Also edits incorrectly charged Ser-tRNA(Ala) and Gly-tRNA(Ala) via its editing domain. The chain is Alanine--tRNA ligase from Shewanella oneidensis (strain ATCC 700550 / JCM 31522 / CIP 106686 / LMG 19005 / NCIMB 14063 / MR-1).